The chain runs to 161 residues: Arginine repressor (161 aa).

Belongs to the ArgR family.

The protein resides in the cytoplasm. It participates in amino-acid biosynthesis; L-arginine biosynthesis [regulation]. In terms of biological role, regulates arginine biosynthesis genes. The chain is Arginine repressor from Corynebacterium aurimucosum (strain ATCC 700975 / DSM 44827 / CIP 107346 / CN-1) (Corynebacterium nigricans).